The primary structure comprises 877 residues: DNA polymerase I (877 aa).

A 5'-3' exonuclease domain is found at 180-270 (TPAQFIDLKA…EIGLDDTLLK (91 aa)). The 161-residue stretch at 308-468 (DEIDFEIVTD…AKEKMMAELL (161 aa)) folds into the 3'-5' exonuclease domain.

This sequence belongs to the DNA polymerase type-A family. As to quaternary structure, single-chain monomer with multiple functions.

The enzyme catalyses DNA(n) + a 2'-deoxyribonucleoside 5'-triphosphate = DNA(n+1) + diphosphate. Functionally, in addition to polymerase activity, this DNA polymerase exhibits 3'-5' and 5'-3' exonuclease activity. The protein is DNA polymerase I (polA) of Lactococcus lactis subsp. lactis (strain IL1403) (Streptococcus lactis).